A 194-amino-acid polypeptide reads, in one-letter code: dITP/XTP pyrophosphatase (194 aa).

A substrate-binding site is contributed by 8-13; the sequence is TKNKGK. Mg(2+)-binding residues include Glu41 and Asp70. Asp70 functions as the Proton acceptor in the catalytic mechanism. Substrate is bound by residues Ser71, 153-156, Lys176, and 181-182; these read FGYD and HR.

This sequence belongs to the HAM1 NTPase family. Homodimer. Requires Mg(2+) as cofactor.

The catalysed reaction is XTP + H2O = XMP + diphosphate + H(+). The enzyme catalyses dITP + H2O = dIMP + diphosphate + H(+). It carries out the reaction ITP + H2O = IMP + diphosphate + H(+). In terms of biological role, pyrophosphatase that catalyzes the hydrolysis of nucleoside triphosphates to their monophosphate derivatives, with a high preference for the non-canonical purine nucleotides XTP (xanthosine triphosphate), dITP (deoxyinosine triphosphate) and ITP. Seems to function as a house-cleaning enzyme that removes non-canonical purine nucleotides from the nucleotide pool, thus preventing their incorporation into DNA/RNA and avoiding chromosomal lesions. This chain is dITP/XTP pyrophosphatase, found in Halalkalibacterium halodurans (strain ATCC BAA-125 / DSM 18197 / FERM 7344 / JCM 9153 / C-125) (Bacillus halodurans).